The primary structure comprises 706 residues: mRNA (2'-O-methyladenosine-N(6)-)-methyltransferase (706 aa).

Residues 1-34 (MANENHGSPREGASLLSHSPGTSSQSQPCSPKPV) form a disordered region. A compositionally biased stretch (polar residues) spans 16 to 29 (LSHSPGTSSQSQPC). Ser30 bears the Phosphoserine mark. One can recognise a WW domain in the interval 43 to 77 (ELVHAGWEKCWSRRESRPYYFNRFTNQSLWEMPVL). The disordered stretch occupies residues 88–148 (GLNATPLPQD…QSVPSSPSIP (61 aa)). The Nuclear localization signal signature appears at 109-113 (KSRKR). The residue at position 116 (Ser116) is a Phosphoserine. Positions 132–147 (IPVTPTSQSVPSSPSI) are enriched in low complexity. Phosphothreonine is present on Thr152. Substrate-binding residues include Arg234 and Arg264. 552-555 (NPPF) lines the S-adenosyl-L-methionine pocket. Substrate is bound by residues Glu557 and 587–591 (WREPP). An S-adenosyl-L-methionine-binding site is contributed by 613–615 (FEH). The disordered stretch occupies residues 663-706 (TAAYKQSGRSHGSSSSSSSSSSSSEAKDRDSGREQGPSREPHPT). The short motif at 668-686 (QSGRSHGSSSSSSSSSSSS) is the Nuclear localization signal element. Positions 675-686 (SSSSSSSSSSSS) are enriched in low complexity. The span at 687–706 (EAKDRDSGREQGPSREPHPT) shows a compositional bias: basic and acidic residues.

This sequence belongs to the CAPAM family. In terms of assembly, interacts with POLR2A; interacts with the phosphorylated C-terminal domain (CTD) of POLR2A.

It is found in the nucleus. It carries out the reaction a 5'-end (N(7)-methyl 5'-triphosphoguanosine)-(2'-O-methyladenosine) in mRNA + S-adenosyl-L-methionine = a 5'-end (N(7)-methyl 5'-triphosphoguanosine)-(N(6),2'-O-dimethyladenosine) in mRNA + S-adenosyl-L-homocysteine + H(+). With respect to regulation, cap-specific adenosine methyltransferase activity is inhibited by zinc. Its function is as follows. Cap-specific adenosine methyltransferase that catalyzes formation of N(6),2'-O-dimethyladenosine cap (m6A(m)) by methylating the adenosine at the second transcribed position of capped mRNAs. Recruited to the early elongation complex of RNA polymerase II (RNAPII) via interaction with POLR2A and mediates formation of m6A(m) co-transcriptionally. The polypeptide is mRNA (2'-O-methyladenosine-N(6)-)-methyltransferase (Mus musculus (Mouse)).